The sequence spans 167 residues: Pathogenesis-related protein PR-1 type (167 aa).

The signal sequence occupies residues 1 to 29 (MAHNHWCNLFSVALVCVVALVMVQYSVAQ). The 120-residue stretch at 36–155 (VDAHNAARSA…NGAWFITCNY (120 aa)) folds into the SCP domain. 3 disulfides stabilise this stretch: cysteine 72-cysteine 144, cysteine 117-cysteine 123, and cysteine 139-cysteine 153.

It belongs to the CRISP family.

Its function is as follows. Probably involved in the defense reaction of plants against pathogens. The chain is Pathogenesis-related protein PR-1 type from Sambucus nigra (European elder).